The sequence spans 172 residues: uncharacterized protein (172 aa).

The tract at residues 130 to 154 (EQEKGAAPQEGKDWQVISEEDKKNQ) is disordered.

This is an uncharacterized protein from Bacillus subtilis (strain 168).